Reading from the N-terminus, the 259-residue chain is tRNA-cytidine(32) 2-sulfurtransferase (259 aa).

The PP-loop motif motif lies at 40–45 (SGGKDS). 3 residues coordinate [4Fe-4S] cluster: C114, C117, and C205.

It belongs to the TtcA family. Homodimer. Mg(2+) serves as cofactor. Requires [4Fe-4S] cluster as cofactor.

It is found in the cytoplasm. The catalysed reaction is cytidine(32) in tRNA + S-sulfanyl-L-cysteinyl-[cysteine desulfurase] + AH2 + ATP = 2-thiocytidine(32) in tRNA + L-cysteinyl-[cysteine desulfurase] + A + AMP + diphosphate + H(+). It participates in tRNA modification. In terms of biological role, catalyzes the ATP-dependent 2-thiolation of cytidine in position 32 of tRNA, to form 2-thiocytidine (s(2)C32). The sulfur atoms are provided by the cysteine/cysteine desulfurase (IscS) system. In Bdellovibrio bacteriovorus (strain ATCC 15356 / DSM 50701 / NCIMB 9529 / HD100), this protein is tRNA-cytidine(32) 2-sulfurtransferase.